A 794-amino-acid polypeptide reads, in one-letter code: Cadherin-12 (794 aa).

The N-terminal stretch at 1 to 23 is a signal peptide; sequence MLTRNCLSLLLWVLFDGGLLTPL. A propeptide spanning residues 24 to 54 is cleaved from the precursor; the sequence is QPQPQQTLATEPRENVIHLPGQRSHFQRVKR. 5 consecutive Cadherin domains span residues 55–160, 161–269, 270–384, 385–487, and 488–609; these read GWVW…EPKF, LDGP…PPRF, PKSI…PPVF, SKPL…EFPP, and EISV…IFLP. Residues 55 to 609 are Extracellular-facing; it reads GWVWNQFFVL…SCNVEAIFLP (555 aa). An N-linked (GlcNAc...) asparagine glycan is attached at N256. N456, N537, and N545 each carry an N-linked (GlcNAc...) asparagine glycan. Residues 610–637 traverse the membrane as a helical segment; it reads VGLSTGALIAILLCIVILLAIVVLYVAL. The Cytoplasmic segment spans residues 638–794; the sequence is RRQKKKDTLM…EESYNPDKVT (157 aa). Position 787 is a phosphoserine (S787).

In terms of tissue distribution, brain.

Its subcellular location is the cell membrane. In terms of biological role, cadherins are calcium-dependent cell adhesion proteins. They preferentially interact with themselves in a homophilic manner in connecting cells; cadherins may thus contribute to the sorting of heterogeneous cell types. The polypeptide is Cadherin-12 (CDH12) (Homo sapiens (Human)).